The following is a 307-amino-acid chain: Myeloid-associated differentiation marker-like protein 2 (307 aa).

2 MARVEL domains span residues Ala-17–Gly-154 and Tyr-159–Phe-303. Transmembrane regions (helical) follow at residues Phe-53 to Phe-73, Ala-90 to Phe-110, Leu-129 to Thr-149, Val-163 to Val-183, Val-198 to Gly-218, Val-232 to Phe-252, and Leu-278 to Ser-298.

The protein belongs to the MAL family.

The protein resides in the membrane. This chain is Myeloid-associated differentiation marker-like protein 2 (MYADML2), found in Bos taurus (Bovine).